A 600-amino-acid polypeptide reads, in one-letter code: DDB1- and CUL4-associated factor 8-like protein 1 (600 aa).

A disordered region spans residues 1 to 122 (MSHQEGSTGG…EEEQPRMCPR (122 aa)). Acidic residues-rich tracts occupy residues 74-83 (SSSEDVELES) and 96-115 (EETE…EEEE). WD repeat units lie at residues 194–233 (SHAG…PVLN), 237–278 (GHDI…YCEN), 284–324 (KHRG…PASK), 332–372 (DKKV…KKEN), 388–427 (DFPT…GAQY), 435–475 (RNND…IIQF), and 479–518 (DRGD…ATEL). The tract at residues 562–600 (PGWRDHGAEFPDEEELDESSSTSDTSEEEGQDRVQCIPS) is disordered.

Belongs to the WD repeat DCAF8 family.

This Homo sapiens (Human) protein is DDB1- and CUL4-associated factor 8-like protein 1 (DCAF8L1).